Here is a 292-residue protein sequence, read N- to C-terminus: Phosphoribosylglycinamide formyltransferase, chloroplastic (292 aa).

The transit peptide at 1–65 directs the protein to the chloroplast; that stretch reads MESRVLFSSQ…KAASSTPQIV (65 aa). A N(1)-(5-phospho-beta-D-ribosyl)glycinamide-binding site is contributed by 88–90; the sequence is GSN. Residues 167–170 and asparagine 184 each bind (6R)-10-formyltetrahydrofolate; that span reads LKLI. Histidine 186 acts as the Proton donor in catalysis. Residue aspartate 227 participates in (6R)-10-formyltetrahydrofolate binding. Glutamate 256 serves as a coordination point for N(1)-(5-phospho-beta-D-ribosyl)glycinamide.

Belongs to the GART family.

Its subcellular location is the plastid. It localises to the chloroplast. The catalysed reaction is N(1)-(5-phospho-beta-D-ribosyl)glycinamide + (6R)-10-formyltetrahydrofolate = N(2)-formyl-N(1)-(5-phospho-beta-D-ribosyl)glycinamide + (6S)-5,6,7,8-tetrahydrofolate + H(+). The protein operates within purine metabolism; IMP biosynthesis via de novo pathway; N(2)-formyl-N(1)-(5-phospho-D-ribosyl)glycinamide from N(1)-(5-phospho-D-ribosyl)glycinamide (10-formyl THF route): step 1/1. This chain is Phosphoribosylglycinamide formyltransferase, chloroplastic (PUR3), found in Arabidopsis thaliana (Mouse-ear cress).